Here is a 486-residue protein sequence, read N- to C-terminus: Cardiolipin synthase A (486 aa).

A run of 2 helical transmembrane segments spans residues threonine 3–valine 23 and methionine 38–phenylalanine 58. PLD phosphodiesterase domains follow at residues methionine 219–arginine 246 and glutamate 399–serine 426. Active-site residues include histidine 224, lysine 226, aspartate 231, histidine 404, lysine 406, and aspartate 411.

Belongs to the phospholipase D family. Cardiolipin synthase subfamily. ClsA sub-subfamily.

Its subcellular location is the cell inner membrane. The catalysed reaction is 2 a 1,2-diacyl-sn-glycero-3-phospho-(1'-sn-glycerol) = a cardiolipin + glycerol. Its function is as follows. Catalyzes the reversible phosphatidyl group transfer from one phosphatidylglycerol molecule to another to form cardiolipin (CL) (diphosphatidylglycerol) and glycerol. The polypeptide is Cardiolipin synthase A (Edwardsiella ictaluri (strain 93-146)).